A 456-amino-acid chain; its full sequence is Glutamate-gated chloride channel (456 aa).

Residues 1 to 22 (MGSGHYFWAILYFASLCSASLA) form the signal peptide. The Extracellular portion of the chain corresponds to 23–245 (NNAKINFREK…VDLLFKREFS (223 aa)). Positions 71, 90, and 154 each coordinate L-glutamate. The cysteines at positions 163 and 177 are disulfide-linked. Ser-183 contacts L-glutamate. Cys-222 and Cys-233 are joined by a disulfide. Residues 246 to 268 (YYLIQIYIPCCMLVIVSWVSFWL) traverse the membrane as a helical segment. The Cytoplasmic segment spans residues 269–273 (DQGAV). Residues 274 to 295 (PARVSLGVTTLLTMATQTSGIN) traverse the membrane as a helical segment. The Extracellular portion of the chain corresponds to 296–302 (ASLPPVS). A helical transmembrane segment spans residues 303-323 (YTKAIDVWTGVCLTFVFGALL). Topologically, residues 324–426 (EFALVNYASR…RQCSRSKRID (103 aa)) are cytoplasmic. A helical membrane pass occupies residues 427–450 (VISRITFPLVFALFNLVYWSTYLF). The Extracellular portion of the chain corresponds to 451–456 (REEEDE).

This sequence belongs to the ligand-gated ion channel (TC 1.A.9) family. Glutamate-gated chloride channel (TC 1.A.9.4) subfamily. In terms of assembly, pentamer. Homomultimer. Expressed in the medulla layers (at protein level). Expressed in all major ON pathway medulla neurons (Mi1, Tm3, Mi4, and Mi9) and in OFF pathway neurons (Tm1, Tm2, Tm4, and Tm9).

It is found in the postsynaptic cell membrane. The protein localises to the cell membrane. Glutamate binding triggers a rapidly reversible current, while the anti-helmintic drug ivermectin triggers a permanently open channel configuration. Inhibited by picrotoxin. In terms of biological role, glutamate-gated chloride channel subunit. Together with Gamma-aminobutyric acid receptor Rdl, plays an important role in the visual response by regulating the activity of ON/OFF-selective neurons. This is Glutamate-gated chloride channel (GluClalpha) from Drosophila melanogaster (Fruit fly).